A 324-amino-acid chain; its full sequence is Large ribosomal subunit protein uL3m (324 aa).

Residues Met1–Phe41 constitute a mitochondrion transit peptide. The disordered stretch occupies residues Pro206–Lys229.

It belongs to the universal ribosomal protein uL3 family. In terms of assembly, part of the 50S ribosomal subunit.

The protein localises to the mitochondrion. In terms of biological role, one of the primary rRNA binding proteins, it binds directly near the 3'-end of the 23S rRNA, where it nucleates assembly of the 50S subunit. This chain is Large ribosomal subunit protein uL3m, found in Arabidopsis thaliana (Mouse-ear cress).